The sequence spans 317 residues: Olfactory receptor 1B1 (317 aa).

Residues 1 to 29 (MSFAPNASHSPVFLLLGFSRANISYTLLF) lie on the Extracellular side of the membrane. 2 N-linked (GlcNAc...) asparagine glycosylation sites follow: Asn-6 and Asn-22. Residues 30-50 (FLFLAIYLTTILGNVTLVLLI) form a helical membrane-spanning segment. The Cytoplasmic segment spans residues 51-66 (SWDSRLHSPMYYLLRG). A helical membrane pass occupies residues 67 to 87 (LSVIDMGLSTVTLPQLLAHLV). Residues 88–98 (SHYPTIPAARC) are Extracellular-facing. Cys-98 and Cys-184 form a disulfide bridge. The helical transmembrane segment at 99–119 (LAQFFFFYAFGVTDTLVIAVM) threads the bilayer. The Cytoplasmic portion of the chain corresponds to 120-144 (ALDRYVAICDPLHYALVMNHQRCAC). Residues 145–165 (LLALSWVVSILHTMLRVGLVL) traverse the membrane as a helical segment. Topologically, residues 166–201 (PLCWTGDAGGNVNLPHFFCDHRPLLRASCSDIHSNE) are extracellular. The helical transmembrane segment at 202–222 (LAIFFEGGFLMLGPCALIVLS) threads the bilayer. The Cytoplasmic portion of the chain corresponds to 223–248 (YVRIGAAILRLPSAAGRRRAVSTCGS). Residues 249–269 (HLTMVGFLYGTIICVYFQPPF) form a helical membrane-spanning segment. Residues 270–276 (QNSQYQD) are Extracellular-facing. Residues 277-297 (MVASVMYTAITPLANPFVYSL) traverse the membrane as a helical segment. Residues 298–317 (HNKDVKGALCRLLEWVKVDP) lie on the Cytoplasmic side of the membrane.

The protein belongs to the G-protein coupled receptor 1 family.

The protein resides in the cell membrane. Functionally, odorant receptor. In Homo sapiens (Human), this protein is Olfactory receptor 1B1 (OR1B1).